The sequence spans 110 residues: Antimicrobial peptide microplusin (110 aa).

The first 20 residues, 1 to 20 (MKAIFVSALLVVALVASTSA), serve as a signal peptide directing secretion. 3 cysteine pairs are disulfide-bonded: C26-C72, C39-C100, and C61-C66.

In terms of tissue distribution, expressed in the hemocytes, fat body and ovaries.

The protein localises to the secreted. Functionally, has bacteriostatic activity against the Gram-positive bacterium M.luteus, but not against Gram-negative bacterium E.coli SBS363. Has fungistatic activity against C.neoformans, but not C.albicans. Binds and sequesters copper and iron ions. Copper-chelating is crucial for antimicrobial activity against M.luteus. In Rhipicephalus microplus (Cattle tick), this protein is Antimicrobial peptide microplusin.